The following is a 111-amino-acid chain: Large ribosomal subunit protein uL24 (111 aa).

Belongs to the universal ribosomal protein uL24 family. In terms of assembly, part of the 50S ribosomal subunit.

Functionally, one of two assembly initiator proteins, it binds directly to the 5'-end of the 23S rRNA, where it nucleates assembly of the 50S subunit. Its function is as follows. One of the proteins that surrounds the polypeptide exit tunnel on the outside of the subunit. The protein is Large ribosomal subunit protein uL24 of Streptococcus pneumoniae (strain Hungary19A-6).